Consider the following 209-residue polypeptide: Large ribosomal subunit protein uL3 (209 aa).

Position 150 is an N5-methylglutamine (Q150).

It belongs to the universal ribosomal protein uL3 family. Part of the 50S ribosomal subunit. Forms a cluster with proteins L14 and L19. Methylated by PrmB.

One of the primary rRNA binding proteins, it binds directly near the 3'-end of the 23S rRNA, where it nucleates assembly of the 50S subunit. The protein is Large ribosomal subunit protein uL3 of Ectopseudomonas mendocina (strain ymp) (Pseudomonas mendocina).